A 91-amino-acid chain; its full sequence is Small ribosomal subunit protein uS19 (91 aa).

The protein belongs to the universal ribosomal protein uS19 family.

In terms of biological role, protein S19 forms a complex with S13 that binds strongly to the 16S ribosomal RNA. The sequence is that of Small ribosomal subunit protein uS19 from Acinetobacter baumannii (strain AB307-0294).